Consider the following 1606-residue polypeptide: Phosphatidylinositol 3,4,5-trisphosphate-dependent Rac exchanger 2 protein (1606 aa).

A DH domain is found at 23 to 214 (LRVCVLSELQ…KAVCSNINEA (192 aa)). In terms of domain architecture, PH spans 245–361 (EMLMCGVLLK…WFEAILKERE (117 aa)). 2 DEP domains span residues 390 to 464 (CRQG…RFRY) and 491 to 566 (SLFT…FFSD). 2 consecutive PDZ domains span residues 592 to 671 (KSLL…VLVS) and 677 to 754 (TVKI…QDSI). The tract at residues 1581-1606 (GVRDRTPQSAPRLYKLCEPPPPAGEE) is disordered.

As to quaternary structure, interacts with RAC1. Isoform 1 is highly expressed in skeletal muscle, heart and placenta, absent from peripheral blood leukocytes. Isoform 2 is expressed in skeletal muscle, kidney, small intestine, and placenta. Isoform 3 is expressed in the heart.

Its function is as follows. Functions as a RAC1 guanine nucleotide exchange factor (GEF), activating Rac proteins by exchanging bound GDP for free GTP. Its activity is synergistically activated by phosphatidylinositol 3,4,5-trisphosphate and the beta gamma subunits of heterotrimeric G protein. Mediates the activation of RAC1 in a PI3K-dependent manner. May be an important mediator of Rac signaling, acting directly downstream of both G protein-coupled receptors and phosphoinositide 3-kinase. The polypeptide is Phosphatidylinositol 3,4,5-trisphosphate-dependent Rac exchanger 2 protein (Homo sapiens (Human)).